Consider the following 166-residue polypeptide: Small ribosomal subunit protein uS5 (166 aa).

Residues 11 to 74 (LQEKLIAVNR…EQAKRNLSKV (64 aa)) form the S5 DRBM domain.

The protein belongs to the universal ribosomal protein uS5 family. As to quaternary structure, part of the 30S ribosomal subunit. Contacts proteins S4 and S8.

With S4 and S12 plays an important role in translational accuracy. In terms of biological role, located at the back of the 30S subunit body where it stabilizes the conformation of the head with respect to the body. This chain is Small ribosomal subunit protein uS5, found in Aeromonas salmonicida (strain A449).